Here is a 209-residue protein sequence, read N- to C-terminus: Protein GrpE (209 aa).

Composition is skewed to basic and acidic residues over residues 1–16 (MKKS…KEES) and 34–44 (KAGEKTAEPEK). The interval 1 to 61 (MKKSTKKEST…EKSPEAACRE (61 aa)) is disordered.

The protein belongs to the GrpE family. Homodimer.

The protein resides in the cytoplasm. Its function is as follows. Participates actively in the response to hyperosmotic and heat shock by preventing the aggregation of stress-denatured proteins, in association with DnaK and GrpE. It is the nucleotide exchange factor for DnaK and may function as a thermosensor. Unfolded proteins bind initially to DnaJ; upon interaction with the DnaJ-bound protein, DnaK hydrolyzes its bound ATP, resulting in the formation of a stable complex. GrpE releases ADP from DnaK; ATP binding to DnaK triggers the release of the substrate protein, thus completing the reaction cycle. Several rounds of ATP-dependent interactions between DnaJ, DnaK and GrpE are required for fully efficient folding. This Methanosarcina acetivorans (strain ATCC 35395 / DSM 2834 / JCM 12185 / C2A) protein is Protein GrpE.